A 265-amino-acid chain; its full sequence is UPF0354 protein BH3252 (265 aa).

Belongs to the UPF0354 family.

The sequence is that of UPF0354 protein BH3252 from Halalkalibacterium halodurans (strain ATCC BAA-125 / DSM 18197 / FERM 7344 / JCM 9153 / C-125) (Bacillus halodurans).